The chain runs to 1202 residues: Liprin-alpha-1 (1202 aa).

The interval 1–33 (MMCEVMPTISEAEGPPGGGGGHGSGSPSQPDAD) is disordered. The segment covering 15–24 (PPGGGGGHGS) has biased composition (gly residues). Residues 34–141 (SHFEQLMVSM…VSRHERSLRM (108 aa)) are a coiled coil. At Ser150 the chain carries Phosphoserine. A coiled-coil region spans residues 176-214 (EKVRERLRVALERCSLLEEELGATHKELMILKEQNNQKK). Disordered stretches follow at residues 224–245 (NHEQ…SLSH) and 426–446 (KNQE…HNKR). Thr230 bears the Phosphothreonine mark. Residues Ser239, Ser242, and Ser244 each carry the phosphoserine modification. Coiled-coil stretches lie at residues 249–521 (LAKV…GASL) and 623–669 (ADAH…SGSL). Phosphoserine is present on Ser448. Over residues 651 to 662 (ENTEQRAEEIES) the composition is skewed to basic and acidic residues. The disordered stretch occupies residues 651 to 855 (ENTEQRAEEI…SKLGGQAEKN (205 aa)). Ser666, Ser668, and Ser693 each carry phosphoserine. A compositionally biased stretch (low complexity) spans 686 to 700 (ASSLASSSPPGSGRS). A compositionally biased stretch (basic and acidic residues) spans 725-736 (SREEVRDDKTTI). At Thr761 the chain carries Phosphothreonine. Basic and acidic residues predominate over residues 762–771 (VSHEDIRDIR). Ser763 bears the Phosphoserine mark. Polar residues predominate over residues 832 to 841 (VSETDNSSQD). Residues 847 to 871 (KLGGQAEKNRKLQKKHELLEEARRQ) adopt a coiled-coil conformation. SAM domains follow at residues 878-944 (WDGP…IMSL), 963-1027 (NHEW…LRRL), and 1051-1120 (WSND…LLVM). A coiled-coil region spans residues 1021–1050 (IMCLRRLNYDRKELERKREESQSEIKDVLV). Ser1133 is modified (phosphoserine). Thr1159 bears the Phosphothreonine mark. The segment at 1163 to 1202 (NFRVTSSMSSPSMQPKKMQMDGNVSGTQRLDSATVRTYSC) is disordered. Residues 1168–1179 (SSMSSPSMQPKK) are compositionally biased toward low complexity. The segment covering 1184 to 1202 (GNVSGTQRLDSATVRTYSC) has biased composition (polar residues).

The protein belongs to the liprin family. Liprin-alpha subfamily. As to quaternary structure, homodimer. Interacts with PTPRF (via D2 domain). Part of a cortical microtubule stabilization complex (CMSC) composed of KANK1, PPFIA1, PPFIBP1, ERC1/ELKS, PHLDB2/LL5beta, CLASPs, KIF21A and possibly additional interactors; within CMSCs KANK1 and PHLDB2/LL5beta seem to be the core components for recruiting microtubule-binding proteins KIF21A and CLASPs, whereas PPFIA1, PPFIBP1 and ERC1/ELKS serve as scaffolds for protein clustering. As to expression, ubiquitous.

It is found in the cytoplasm. It localises to the cell cortex. Its function is as follows. May regulate the disassembly of focal adhesions. May localize receptor-like tyrosine phosphatases type 2A at specific sites on the plasma membrane, possibly regulating their interaction with the extracellular environment and their association with substrates. The polypeptide is Liprin-alpha-1 (PPFIA1) (Homo sapiens (Human)).